A 747-amino-acid polypeptide reads, in one-letter code: AMP deaminase 1 (747 aa).

T81 is subject to Phosphothreonine. At S85 the chain carries Phosphoserine. The residue at position 216 (Y216) is a Phosphotyrosine. Zn(2+) is bound by residues H303 and H305. Substrate-binding positions include H305 and 374–379 (KFNDKY). Residue S441 is modified to Phosphoserine. Residue H572 participates in Zn(2+) binding. E575 lines the substrate pocket. The active-site Proton acceptor is H594. D649 lines the Zn(2+) pocket. 650-653 (DPMQ) is a substrate binding site.

This sequence belongs to the metallo-dependent hydrolases superfamily. Adenosine and AMP deaminases family. Homotetramer. Requires Zn(2+) as cofactor.

The enzyme catalyses AMP + H2O + H(+) = IMP + NH4(+). It functions in the pathway purine metabolism; IMP biosynthesis via salvage pathway; IMP from AMP: step 1/1. In terms of biological role, AMP deaminase plays a critical role in energy metabolism. The chain is AMP deaminase 1 from Homo sapiens (Human).